Consider the following 231-residue polypeptide: Uracil phosphoribosyltransferase (231 aa).

Residue 38-42 (KGLVR) participates in GTP binding. 5-phospho-alpha-D-ribose 1-diphosphate contacts are provided by residues arginine 87, arginine 112, and 140–148 (DPMIATGST). Uracil is bound by residues isoleucine 203 and 208-210 (GDA). Aspartate 209 is a binding site for 5-phospho-alpha-D-ribose 1-diphosphate.

The protein belongs to the UPRTase family. It depends on Mg(2+) as a cofactor.

The catalysed reaction is UMP + diphosphate = 5-phospho-alpha-D-ribose 1-diphosphate + uracil. It functions in the pathway pyrimidine metabolism; UMP biosynthesis via salvage pathway; UMP from uracil: step 1/1. Allosterically activated by GTP. Its function is as follows. Catalyzes the conversion of uracil and 5-phospho-alpha-D-ribose 1-diphosphate (PRPP) to UMP and diphosphate. This chain is Uracil phosphoribosyltransferase, found in Methanococcus maripaludis (strain C7 / ATCC BAA-1331).